The primary structure comprises 180 residues: Pro-glucagon (180 aa).

An N-terminal signal peptide occupies residues 1-20 (MKSIYFVAGLFVMLVQGSWQ). The disordered stretch occupies residues 26–56 (TEEKSRSFSAPQTEPLNDLDQMNEDKRHSQG). Serine 54 bears the Phosphoserine mark. Residues 84-89 (NKNNIA) constitute a propeptide that is removed on maturation. Serine 105 and serine 108 each carry phosphoserine. At arginine 127 the chain carries Arginine amide. A propeptide spanning residues 131 to 145 (DFPEEVAIVEEFRRR) is cleaved from the precursor. Serine 150 and serine 152 each carry phosphoserine.

Belongs to the glucagon family. Post-translationally, proglucagon is post-translationally processed in a tissue-specific manner in pancreatic A cells and intestinal L cells. In pancreatic A cells, the major bioactive hormone is glucagon cleaved by PCSK2/PC2. In the intestinal L cells PCSK1/PC1 liberates GLP-1, GLP-2, glicentin and oxyntomodulin. GLP-1 is further N-terminally truncated by post-translational processing in the intestinal L cells resulting in GLP-1(7-37) GLP-1-(7-36)amide. The C-terminal amidation is neither important for the metabolism of GLP-1 nor for its effects on the endocrine pancreas. As to expression, glucagon is secreted in the A cells of the islets of Langerhans. GLP-1, GLP-2, oxyntomodulin and glicentin are secreted from enteroendocrine cells throughout the gastrointestinal tract. GLP-1 and GLP-2 are also secreted in selected neurons in the brain.

Its subcellular location is the secreted. Functionally, plays a key role in glucose metabolism and homeostasis. Regulates blood glucose by increasing gluconeogenesis and decreasing glycolysis. A counterregulatory hormone of insulin, raises plasma glucose levels in response to insulin-induced hypoglycemia. Plays an important role in initiating and maintaining hyperglycemic conditions in diabetes. Potent stimulator of glucose-dependent insulin release. Also stimulates insulin release in response to IL6. Plays important roles on gastric motility and the suppression of plasma glucagon levels. May be involved in the suppression of satiety and stimulation of glucose disposal in peripheral tissues, independent of the actions of insulin. Has growth-promoting activities on intestinal epithelium. May also regulate the hypothalamic pituitary axis (HPA) via effects on LH, TSH, CRH, oxytocin, and vasopressin secretion. Increases islet mass through stimulation of islet neogenesis and pancreatic beta cell proliferation. Inhibits beta cell apoptosis. In terms of biological role, stimulates intestinal growth and up-regulates villus height in the small intestine, concomitant with increased crypt cell proliferation and decreased enterocyte apoptosis. The gastrointestinal tract, from the stomach to the colon is the principal target for GLP-2 action. Plays a key role in nutrient homeostasis, enhancing nutrient assimilation through enhanced gastrointestinal function, as well as increasing nutrient disposal. Stimulates intestinal glucose transport and decreases mucosal permeability. Its function is as follows. Significantly reduces food intake. Inhibits gastric emptying in humans. Suppression of gastric emptying may lead to increased gastric distension, which may contribute to satiety by causing a sensation of fullness. Functionally, may modulate gastric acid secretion and the gastro-pyloro-duodenal activity. May play an important role in intestinal mucosal growth in the early period of life. The polypeptide is Pro-glucagon (GCG) (Canis lupus familiaris (Dog)).